Here is a 229-residue protein sequence, read N- to C-terminus: Somatolactin (229 aa).

Residues 1-24 (MHLVSVIQRGVWAVLLWPNLLASS) form the signal peptide. 3 disulfides stabilise this stretch: Cys-29/Cys-39, Cys-87/Cys-203, and Cys-220/Cys-228. 2 N-linked (GlcNAc...) asparagine glycosylation sites follow: Asn-143 and Asn-175.

The protein belongs to the somatotropin/prolactin family.

Its subcellular location is the secreted. The protein is Somatolactin of Cyclopterus lumpus (Lumpsucker).